The following is a 354-amino-acid chain: Carbonic anhydrase 12 (354 aa).

The first 24 residues, 1 to 24 (MPRRSLHAAAVLLLVILKEQPSSP), serve as a signal peptide directing secretion. Topologically, residues 25–301 (APVNGSKWTY…VQVCTAAGLS (277 aa)) are extracellular. Asn-28 and Asn-80 each carry an N-linked (GlcNAc...) asparagine glycan. One can recognise an Alpha-carbonic anhydrase domain in the interval 30-289 (SKWTYFGPDG…FDERLVYTSF (260 aa)). A disulfide bridge links Cys-50 with Cys-230. The active-site Proton donor/acceptor is the His-94. The Zn(2+) site is built by His-119, His-121, and His-145. Asn-162 carries N-linked (GlcNAc...) asparagine glycosylation. 226–227 (TT) provides a ligand contact to substrate. Residues 302 to 322 (LGIILSLALAGILGICIVVVV) form a helical membrane-spanning segment. Residues 323 to 354 (SIWLFRRKSIKKGDNKGVIYKPATKMETEAHA) lie on the Cytoplasmic side of the membrane.

The protein belongs to the alpha-carbonic anhydrase family. As to quaternary structure, homodimer. The cofactor is Zn(2+). In terms of tissue distribution, highly expressed in colon, kidney, prostate, intestine and activated lymphocytes. Expressed at much higher levels in the renal cell cancers than in surrounding normal kidney tissue. Moderately expressed in pancreas, ovary and testis. Expressed in sweat glands and bronchiolar epithelium.

The protein resides in the membrane. The protein localises to the cell membrane. The enzyme catalyses hydrogencarbonate + H(+) = CO2 + H2O. Inhibited by coumarins, saccharin, sulfonamide derivatives such as acetazolamide (AZA), benzenesulfonamide and derivatives (4-carboxyethylbenzene-sulfonamide, 4-carboxyethylbenzene-sulfonamide ethyl ester, 4-(acetyl-2-aminoethyl)benzene-sulfonamide, 4-aminoethylbenzene-sulfonamide) and Foscarnet (phosphonoformate trisodium salt). Functionally, reversible hydration of carbon dioxide. The sequence is that of Carbonic anhydrase 12 from Homo sapiens (Human).